We begin with the raw amino-acid sequence, 663 residues long: GPI mannosyltransferase 3 (663 aa).

Basic residues predominate over residues 1–11 (MPMSARSRRSN). Positions 1–44 (MPMSARSRRSNPRLPPSPSSSSSSDAVRASPHSSPPSRLRPPSA) are disordered. Residues 19–42 (SSSSSSDAVRASPHSSPPSRLRPP) show a composition bias toward low complexity. Transmembrane regions (helical) follow at residues 47-67 (DVSSNILLFLIGFRLVNALTV), 110-130 (PLIFAAVYTVADLVARTLGLT), 137-157 (LLIAGPGITQAVIAAVGDFYT), 226-246 (VLAVSTVVDRFFYGFWTFPPL), 269-289 (YASQGYPLLLTTALPFTLVGL), 304-324 (GSILVQLASISLAMPATLSVI), 335-355 (LLPALHILSASPLVEFFIPAL), and 367-387 (LTLIFLLWANVAIAIYTTLFH). The segment at 492-512 (HIPRRPSYATPPSSQRQPTQL) is disordered. Residues 501–511 (TPPSSQRQPTQ) are compositionally biased toward polar residues.

This sequence belongs to the glycosyltransferase 22 family. PIGB subfamily.

Its subcellular location is the endoplasmic reticulum membrane. Its pathway is glycolipid biosynthesis; glycosylphosphatidylinositol-anchor biosynthesis. In terms of biological role, mannosyltransferase involved in glycosylphosphatidylinositol-anchor biosynthesis. Transfers the third mannose to Man2-GlcN-acyl-PI during GPI precursor assembly. This is GPI mannosyltransferase 3 (gpi10) from Emericella nidulans (strain FGSC A4 / ATCC 38163 / CBS 112.46 / NRRL 194 / M139) (Aspergillus nidulans).